Reading from the N-terminus, the 444-residue chain is MPSTRRQQEGGGADAETHTVYGTNLITNRNSQEDENVVEEAELKYGASHVIHLFVPVSLCMALVVFTMNTITFYSQNNGRHLLYTPFVRETDSIVEKGLMSLGNALVMLCVVVLMTVLLIVFYKYKFYKLIHGWLIVSSFLLLFLFTTIYVQEVLKSFDVSPSALLVLFGLGNYGVLGMMCIHWKGPLRLQQFYLITMSALMALVFIKYLPEWTVWFVLFVISVWDLVAVLTPKGPLRYLVETAQERNEPIFPALIYSSGVIYPYVLVTAVENTTDPREPTSSDSNTSTAFPGEASCSSETPKRPKVKRIPQKVQIESNTTASTTQNSGVRVERELAAERPTVQDANFHRHEEEERGVKLGLGDFIFYSVLLGKASSYFDWNTTIACYVAILIGLCFTLVLLAVFKRALPALPISIFSGLIFYFCTRWIITPFVTQVSQKCLLY.

Residues 1–45 lie on the Cytoplasmic side of the membrane; it reads MPSTRRQQEGGGADAETHTVYGTNLITNRNSQEDENVVEEAELKY. Residues 46-66 traverse the membrane as a helical segment; sequence GASHVIHLFVPVSLCMALVVF. Residues 67-101 are Lumenal-facing; the sequence is TMNTITFYSQNNGRHLLYTPFVRETDSIVEKGLMS. A helical membrane pass occupies residues 102–122; the sequence is LGNALVMLCVVVLMTVLLIVF. At 123-130 the chain is on the cytoplasmic side; the sequence is YKYKFYKL. Residues 131–151 form a helical membrane-spanning segment; it reads IHGWLIVSSFLLLFLFTTIYV. The Lumenal portion of the chain corresponds to 152-163; that stretch reads QEVLKSFDVSPS. Residues 164 to 184 traverse the membrane as a helical segment; it reads ALLVLFGLGNYGVLGMMCIHW. Over 185–189 the chain is Cytoplasmic; the sequence is KGPLR. Residues 190-210 form a helical membrane-spanning segment; that stretch reads LQQFYLITMSALMALVFIKYL. The Lumenal segment spans residues 211–212; the sequence is PE. A helical transmembrane segment spans residues 213-233; it reads WTVWFVLFVISVWDLVAVLTP. Asp-226 is an active-site residue. Residues 234-359 are Cytoplasmic-facing; that stretch reads KGPLRYLVET…RHEEEERGVK (126 aa). The segment at 275–331 is disordered; that stretch reads TDPREPTSSDSNTSTAFPGEASCSSETPKRPKVKRIPQKVQIESNTTASTTQNSGVR. Composition is skewed to polar residues over residues 282–300 and 315–329; these read SSDS…CSSE and QIES…QNSG. The helical transmembrane segment at 360–380 threads the bilayer; sequence LGLGDFIFYSVLLGKASSYFD. Asp-364 is an active-site residue. Over 381–384 the chain is Lumenal; it reads WNTT. Residues 385 to 405 traverse the membrane as a helical segment; that stretch reads IACYVAILIGLCFTLVLLAVF. The Cytoplasmic portion of the chain corresponds to 406 to 413; sequence KRALPALP. The PAL signature appears at 410-412; the sequence is PAL. Positions 414-434 form an intramembrane region, helical; that stretch reads ISIFSGLIFYFCTRWIITPFV. At 435–444 the chain is on the cytoplasmic side; the sequence is TQVSQKCLLY.

The protein belongs to the peptidase A22A family. As to quaternary structure, homodimer. Component of the gamma-secretase complex, a complex probably composed of the presenilin homodimer (sel-12, hop-1 or spe-4), nicastrin (aph-2), aph-1 and pen-2. Interacts with sel-10. Expressed in most neurons.

The protein localises to the endoplasmic reticulum membrane. It is found in the golgi apparatus membrane. Probable catalytic subunit of the gamma-secretase complex, an endoprotease complex that catalyzes the intramembrane cleavage of integral membrane proteins such as Notch receptors (lin-12 or glp-1). Provides the major presenilin function compared to hop-1 and spe-4. Required cell-autonomously for correct neurite connectivity of the AIY cholinergic interneurons and their correct functioning in thermotaxis. Required for mesodermal patterning of muscle function. Promotes basement membrane gap formation during tissue remodeling. This is Presenilin sel-12 from Caenorhabditis elegans.